A 497-amino-acid polypeptide reads, in one-letter code: Probable polyamine oxidase 4 (497 aa).

Residues glutamate 58, arginine 66, valine 247, and glutamate 435 each coordinate FAD. A Microbody targeting signal motif is present at residues 495–497 (SRM).

It belongs to the flavin monoamine oxidase family. FAD serves as cofactor. As to expression, highly expressed in roots, flowers and greening cotelydons. Lower expression in other tissues.

It localises to the peroxisome. It catalyses the reaction spermine + O2 + H2O = 3-aminopropanal + spermidine + H2O2. It carries out the reaction spermidine + O2 + H2O = 3-aminopropanal + putrescine + H2O2. The protein operates within amine and polyamine degradation; spermine degradation. It participates in amine and polyamine degradation; spermidine degradation. Functionally, flavoenzyme involved in polyamine back-conversion. Catalyzes the oxidation of the secondary amino group of polyamines, such as spermine and spermidine. Substrate preference is spermine &gt; spermidine. No activity detected when putrescine or N(1)-acetylspermine are used as substrates. Plays an important role in the regulation of polyamine intracellular concentration. This Arabidopsis thaliana (Mouse-ear cress) protein is Probable polyamine oxidase 4 (PAO4).